The sequence spans 1274 residues: Protein ECM30 (1274 aa).

Disordered stretches follow at residues 23–42 (EDADASSPSRTSSPSPSLSV), 405–439 (RRAVSTSSHDNSSSSHASLPSSSSAAYHTKPQTKP), and 494–517 (SSSSSTTRSNSSTTSNGTSNDTSN). 3 stretches are compositionally biased toward low complexity: residues 27 to 42 (ASSPSRTSSPSPSLSV), 409 to 432 (STSSHDNSSSSHASLPSSSSAAYH), and 494 to 515 (SSSSSTTRSNSSTTSNGTSNDT). Serine 635 carries the phosphoserine modification. A compositionally biased stretch (low complexity) spans 803-822 (NQQHQNQQQGQNDNRGQNQN). The segment at 803–842 (NQQHQNQQQGQNDNRGQNQNEDPGQENESPTPYLLFNPAS) is disordered. The residue at position 1065 (serine 1065) is a Phosphoserine. The disordered stretch occupies residues 1100 to 1149 (HLRSSSSSSSITLEKTTSNSSSIRTRPNSHHVAPETNNNNSTNGNSNNSS). Polar residues predominate over residues 1110 to 1125 (ITLEKTTSNSSSIRTR). Residues 1135-1149 (TNNNNSTNGNSNNSS) are compositionally biased toward low complexity.

It is found in the cytoplasm. Seems to be involved in cell wall organization and biogenesis. In Saccharomyces cerevisiae (strain ATCC 204508 / S288c) (Baker's yeast), this protein is Protein ECM30 (ECM30).